The following is a 511-amino-acid chain: AMP phosphorylase (511 aa).

AMP contacts are provided by residues Gly168, 194 to 199 (SRAITS), and Thr203. The active-site Proton donor is Asp256. Residues Ser262 and Lys286 each contribute to the AMP site.

The protein belongs to the thymidine/pyrimidine-nucleoside phosphorylase family. Type 2 subfamily.

The catalysed reaction is AMP + phosphate = alpha-D-ribose 1,5-bisphosphate + adenine. It carries out the reaction CMP + phosphate = cytosine + alpha-D-ribose 1,5-bisphosphate. It catalyses the reaction UMP + phosphate = alpha-D-ribose 1,5-bisphosphate + uracil. Its function is as follows. Catalyzes the conversion of AMP and phosphate to adenine and ribose 1,5-bisphosphate (R15P). Exhibits phosphorylase activity toward CMP and UMP in addition to AMP. Functions in an archaeal AMP degradation pathway, together with R15P isomerase and RubisCO. The protein is AMP phosphorylase of Thermofilum pendens (strain DSM 2475 / Hrk 5).